The primary structure comprises 266 residues: Protein crossbronx-like (266 aa).

The region spanning 15–178 (KQGYKILAEY…IQELAISSRR (164 aa)) is the UBC core domain. Residues 216 to 266 (EATCEDDSPPAELLGHIDSSRQLDEDEANQRGKLQAATTDLQHGARCSVAQ) are disordered.

This sequence belongs to the ubiquitin-conjugating enzyme family. FTS subfamily.

The sequence is that of Protein crossbronx-like from Drosophila ananassae (Fruit fly).